The following is a 372-amino-acid chain: THAP domain-containing protein 5 (372 aa).

The THAP-type zinc-finger motif lies at 1 to 85 (MTRYCAATRC…LKPNAIPTLF (85 aa)). Residues 306-362 (TDRHYLRQKIAKLQSKIAVLEAQENATLSRLRLLESVIAKLKQENLLSDEKLKILEN) adopt a coiled-coil conformation.

The protein localises to the nucleus. The sequence is that of THAP domain-containing protein 5 (thap5) from Xenopus laevis (African clawed frog).